Consider the following 495-residue polypeptide: Aspartyl/glutamyl-tRNA(Asn/Gln) amidotransferase subunit B (495 aa).

It belongs to the GatB/GatE family. GatB subfamily. Heterotrimer of A, B and C subunits.

It catalyses the reaction L-glutamyl-tRNA(Gln) + L-glutamine + ATP + H2O = L-glutaminyl-tRNA(Gln) + L-glutamate + ADP + phosphate + H(+). It carries out the reaction L-aspartyl-tRNA(Asn) + L-glutamine + ATP + H2O = L-asparaginyl-tRNA(Asn) + L-glutamate + ADP + phosphate + 2 H(+). Functionally, allows the formation of correctly charged Asn-tRNA(Asn) or Gln-tRNA(Gln) through the transamidation of misacylated Asp-tRNA(Asn) or Glu-tRNA(Gln) in organisms which lack either or both of asparaginyl-tRNA or glutaminyl-tRNA synthetases. The reaction takes place in the presence of glutamine and ATP through an activated phospho-Asp-tRNA(Asn) or phospho-Glu-tRNA(Gln). The protein is Aspartyl/glutamyl-tRNA(Asn/Gln) amidotransferase subunit B of Methanosarcina acetivorans (strain ATCC 35395 / DSM 2834 / JCM 12185 / C2A).